A 63-amino-acid chain; its full sequence is Large ribosomal subunit protein eL37 (63 aa).

Zn(2+) is bound by residues Cys-20, Cys-23, Cys-35, and Cys-38. The C4-type zinc finger occupies 20-38; that stretch reads CRRCGRRAFNVKKGYCAAC.

The protein belongs to the eukaryotic ribosomal protein eL37 family. In terms of assembly, part of the 50S ribosomal subunit. Zn(2+) is required as a cofactor.

In terms of biological role, binds to the 23S rRNA. This chain is Large ribosomal subunit protein eL37, found in Thermococcus kodakarensis (strain ATCC BAA-918 / JCM 12380 / KOD1) (Pyrococcus kodakaraensis (strain KOD1)).